The sequence spans 1159 residues: MEADWDELSRIPVPPPSPHALPTVATTIAFDDVMELLWVGNEYGRITSFYGPELQRYTSVRAHPVAEGIVRQILFHERGVISLSSRSVHMITRRGLTQWHVAHEEMVDLRCMSFTAQLNRVIVAGCQKVMFTIDIDKGVIVDKLPTEYNYTMMKKSRYLCAATDTGSVNALSLSDFRVVKSWKAHGTAVNDMDARNDLLVTCGFSVRHLGSPIVDPLANVYDLKTLSPLPPIPFHAGAAYVRMHPKLSTTSFVASQTGQLQVVDLMNPNSINLRQANVSFMLGIDISPSGEALAINDAECMVHLWGSPAKIHFNEMSKEVELADVTHRPPPLDWSPDTPLNMIGMPYYHERLFSAWPSHLVFEVGSPPAPIDTGLIPYLRPAEIGHCAPNPKKTRRYQVENTRAVATTEPALIAPKFLSEKAREQSKKSDGSVAEAAGALAGAKLNGEAEDDPLLKYSNVEIKYSRFGVDDFDFRFYNQTNFSGLETHIANSFTNALLQLLKFIPLVRNVALHHAASSCVFENCLLCEMGYLFDMLEKANGQNCQATNLLKTFSSFREAASLGILEENLTNKSLSSAIQAVNRFFLGQIAHDFRTIMPNSDDLEQRLATIASESIQCRYCGNEIVRPGNSLVNELIYPNMDIKHTRRNPAFRFSNILRASIERETQNKGWCNYCRRYQPVGIRKSVHRMPLVMMLNAALNTPMARRLWAIPGWLPDEVGIVIDGGQTLCYEGEDLRMRVQANMPGLIVYELVGVVTEIDIPEHQKPHLVSFINVAISSPEPQPQNKWHLFNDFLVTEVDKDEALRFNQPWKVPCVLAFQVKDARHAMDDSWKDALDTTLLFRDWSLNGGRPVESRVTLSEDEKPTPGTPMALDTEFVDLEKAEIDVKADGSQEIVRPSKSGLARVSVLRGSGVREGVPFIDDYITIKEPIVDYVTQYSGIKPGDLDPRTSEHNLVPLKVAYKKLWLLLNLGCVFVGHGLASDFRKINIQVPKSQTVDTQYLFFHPGKSRRLSLRYLAWAVFKEYIQEEPADNNEGHDSIEDARMALRLWKKFLEYEDAGIVSQMLEEIFREGSKLGFRPPPRNGTAAVLSRPGTAVTMQNTNSGRNTPTVPDAAGAPAVPASAPTTPGRGFRRADALTPGDGTFSGPGAGDFFGGSPLK.

Residues Ala-276–Glu-315 form a WD repeat. Residues Met-316–Asp-451 are linker. The region spanning Asp-452–Lys-821 is the USP domain. Residues Leu-872 to Leu-1048 enclose the Exonuclease domain. A divalent metal cation is bound by residues Asp-873, Glu-875, Asp-982, and Asp-1041. The disordered stretch occupies residues Thr-1094–Lys-1159. Positions Val-1096–Asn-1106 are enriched in polar residues. Over residues Thr-1107 to Gly-1128 the composition is skewed to low complexity. Gly residues predominate over residues Thr-1143–Phe-1153.

It belongs to the peptidase C19 family. PAN2 subfamily. In terms of assembly, forms a heterotrimer with an asymmetric homodimer of the regulatory subunit pan3 to form the poly(A)-nuclease (PAN) deadenylation complex. Requires a divalent metal cation as cofactor.

It is found in the cytoplasm. It catalyses the reaction Exonucleolytic cleavage of poly(A) to 5'-AMP.. Its activity is regulated as follows. Positively regulated by the regulatory subunit pan3. Catalytic subunit of the poly(A)-nuclease (PAN) deadenylation complex, one of two cytoplasmic mRNA deadenylases involved in mRNA turnover. PAN specifically shortens poly(A) tails of RNA and the activity is stimulated by poly(A)-binding protein pab1. PAN deadenylation is followed by rapid degradation of the shortened mRNA tails by the CCR4-NOT complex. Deadenylated mRNAs are then degraded by two alternative mechanisms, namely exosome-mediated 3'-5' exonucleolytic degradation, or deadenylation-dependent mRNA decaping and subsequent 5'-3' exonucleolytic degradation by xrn1. May also be involved in post-transcriptional maturation of mRNA poly(A) tails. The polypeptide is PAN2-PAN3 deadenylation complex catalytic subunit pan2 (Aspergillus terreus (strain NIH 2624 / FGSC A1156)).